We begin with the raw amino-acid sequence, 321 residues long: MVAAEENPESFFAAAPPLRDADAVAARLGEFIARNSSAAGAGGGGRRIVCVTSGGTTVPLEQRCVRYIDNFSSGHRGAASTEYFLKAGYAVIFLHRRGSCQPYCRFLPDDSFLKFFDVDAESKVQVAECHAPVVKKAIGDYCKAIEGGYLLKLPFTTIFEYLQLLKMVATSISSAGPLGMFYLAAAVSDFYVPWDSMAKHKIQSGGGPLDMRLSQVPKMLSVLRNQWAPLAFCISFKLETDSDILIQKADMALNKYKMNIVVANLLATYKEEVIIVTDKERSTIRKMNKDEDLEMQIIKILSQNHSKYICGSTNGCVQSPY.

Belongs to the PPC synthetase family. As to quaternary structure, homodimer.

The catalysed reaction is (R)-4'-phosphopantothenate + L-cysteine + CTP = N-[(R)-4-phosphopantothenoyl]-L-cysteine + CMP + diphosphate + H(+). The protein operates within cofactor biosynthesis; coenzyme A biosynthesis; CoA from (R)-pantothenate: step 2/5. Functionally, catalyzes the first step in the biosynthesis of coenzyme A from vitamin B5, where cysteine is conjugated to 4'-phosphopantothenate to form 4-phosphopantothenoylcysteine. This Oryza sativa subsp. japonica (Rice) protein is Phosphopantothenate--cysteine ligase 1.